We begin with the raw amino-acid sequence, 173 residues long: Translation initiation factor IF-3 (173 aa).

This sequence belongs to the IF-3 family. Monomer.

The protein localises to the cytoplasm. In terms of biological role, IF-3 binds to the 30S ribosomal subunit and shifts the equilibrium between 70S ribosomes and their 50S and 30S subunits in favor of the free subunits, thus enhancing the availability of 30S subunits on which protein synthesis initiation begins. In Enterococcus faecalis (strain ATCC 700802 / V583), this protein is Translation initiation factor IF-3.